Consider the following 25-residue polypeptide: Glutamine synthetase 2 isozyme (25 aa).

This sequence belongs to the glutamine synthetase family. As to quaternary structure, homohexamer.

Its subcellular location is the plastid. It localises to the chloroplast. The catalysed reaction is L-glutamate + NH4(+) + ATP = L-glutamine + ADP + phosphate + H(+). Its function is as follows. Plays a key role in the nitrogen metabolism of microorganisms, animals and plants. The protein is Glutamine synthetase 2 isozyme of Emiliania huxleyi (Coccolithophore).